A 535-amino-acid chain; its full sequence is D-2-hydroxyglutarate dehydrogenase, mitochondrial (535 aa).

Residues 1–50 (MVLHLVPRWSASLFRASPRWKKTYSQRASAQLKWLGCPRSVYSPLACRAY) constitute a mitochondrion transit peptide. Positions 110–289 (VRGCSKVLLR…TAVSIVCPPR (180 aa)) constitute an FAD-binding PCMH-type domain. Lys115 is modified (N6-succinyllysine). 3 residues coordinate (R)-2-hydroxyglutarate: Arg400, Thr404, and Lys415. Residue Arg400 participates in (R)-lactate binding. The (R)-malate site is built by Arg400, Thr404, and Lys415. 2 residues coordinate Zn(2+): His448 and His455. Residue Asn457 coordinates (R)-2-hydroxyglutarate. Position 489 (Glu489) interacts with Zn(2+). His490 provides a ligand contact to (R)-2-hydroxyglutarate. His490 is a (R)-lactate binding site. Position 490 (His490) interacts with (R)-malate.

It belongs to the FAD-binding oxidoreductase/transferase type 4 family. FAD serves as cofactor.

The protein resides in the mitochondrion. It carries out the reaction (R)-2-hydroxyglutarate + A = 2-oxoglutarate + AH2. The enzyme catalyses (R)-malate + A = oxaloacetate + AH2. With respect to regulation, activated by zinc, cobalt and manganese ions. Inhibited by EDTA. Functionally, catalyzes the oxidation of D-2-hydroxyglutarate (D-2-HG) to alpha-ketoglutarate. Also catalyzes the oxidation of other D-2-hydroxyacids, such as D-malate (D-MAL) and D-lactate (D-LAC). Exhibits high activities towards D-2-HG and D-MAL but a very weak activity towards D-LAC. In Rattus norvegicus (Rat), this protein is D-2-hydroxyglutarate dehydrogenase, mitochondrial.